A 637-amino-acid chain; its full sequence is Chaperone protein HtpG (637 aa).

The segment at 1 to 335 (MQGTVNSERL…SSDLPLNISR (335 aa)) is a; substrate-binding. The interval 336 to 559 (ETLQNNKIIE…DGSMDIRMER (224 aa)) is b. The c stretch occupies residues 560-637 (FLREQKQLNY…RMNNVLSQIN (78 aa)).

It belongs to the heat shock protein 90 family. In terms of assembly, homodimer.

It is found in the cytoplasm. Molecular chaperone. Has ATPase activity. This chain is Chaperone protein HtpG, found in Ehrlichia ruminantium (strain Welgevonden).